Here is a 262-residue protein sequence, read N- to C-terminus: Putative BTB/POZ domain-containing protein L834 (262 aa).

In terms of domain architecture, BTB spans 16–86 (FDVVVELTDE…FYKKNIQPCI (71 aa)).

Belongs to the mimivirus BTB/WD family.

In Acanthamoeba polyphaga (Amoeba), this protein is Putative BTB/POZ domain-containing protein L834.